We begin with the raw amino-acid sequence, 371 residues long: Aspartate-semialdehyde dehydrogenase (371 aa).

NADP(+) is bound by residues 11–14 (RGMV), 38–39 (TS), and Gln-75. Residue Arg-104 participates in phosphate binding. Catalysis depends on Cys-137, which acts as the Acyl-thioester intermediate. A substrate-binding site is contributed by Gln-164. 167–168 (SG) provides a ligand contact to NADP(+). Position 243 (Glu-243) interacts with substrate. Residue Lys-246 coordinates phosphate. Arg-269 lines the substrate pocket. The active-site Proton acceptor is His-276. Gln-352 is an NADP(+) binding site.

Belongs to the aspartate-semialdehyde dehydrogenase family. Homodimer.

It carries out the reaction L-aspartate 4-semialdehyde + phosphate + NADP(+) = 4-phospho-L-aspartate + NADPH + H(+). It functions in the pathway amino-acid biosynthesis; L-lysine biosynthesis via DAP pathway; (S)-tetrahydrodipicolinate from L-aspartate: step 2/4. Its pathway is amino-acid biosynthesis; L-methionine biosynthesis via de novo pathway; L-homoserine from L-aspartate: step 2/3. The protein operates within amino-acid biosynthesis; L-threonine biosynthesis; L-threonine from L-aspartate: step 2/5. Functionally, catalyzes the NADPH-dependent formation of L-aspartate-semialdehyde (L-ASA) by the reductive dephosphorylation of L-aspartyl-4-phosphate. The sequence is that of Aspartate-semialdehyde dehydrogenase from Buchnera aphidicola subsp. Acyrthosiphon pisum (strain APS) (Acyrthosiphon pisum symbiotic bacterium).